The primary structure comprises 89 residues: Small ribosomal subunit protein uS15 (89 aa).

It belongs to the universal ribosomal protein uS15 family. As to quaternary structure, part of the 30S ribosomal subunit. Forms a bridge to the 50S subunit in the 70S ribosome, contacting the 23S rRNA.

Its function is as follows. One of the primary rRNA binding proteins, it binds directly to 16S rRNA where it helps nucleate assembly of the platform of the 30S subunit by binding and bridging several RNA helices of the 16S rRNA. Forms an intersubunit bridge (bridge B4) with the 23S rRNA of the 50S subunit in the ribosome. In Marinomonas sp. (strain MWYL1), this protein is Small ribosomal subunit protein uS15.